A 95-amino-acid polypeptide reads, in one-letter code: Protein TusB (95 aa).

This sequence belongs to the DsrH/TusB family. Heterohexamer, formed by a dimer of trimers. The hexameric TusBCD complex contains 2 copies each of TusB, TusC and TusD. The TusBCD complex interacts with TusE.

The protein resides in the cytoplasm. Its function is as follows. Part of a sulfur-relay system required for 2-thiolation of 5-methylaminomethyl-2-thiouridine (mnm(5)s(2)U) at tRNA wobble positions. In Shigella dysenteriae serotype 1 (strain Sd197), this protein is Protein TusB.